The following is a 363-amino-acid chain: MAQPALKVVDMPPVDKDKSKAIDAALSQIERAFGKGSIMRLGKSDKVQEVETVSTGSLGLDIALGVGGLPRGRVIEIYGPESSGKTTLALHTIAEAQKKGGVCAFVDAEHALDPVYARKLGVNLDDLLISQPDTGEQALEITDTLVRSGAIDVLVVDSVAALTPRAEIEGEMGESQPGLQARLMSQALRKLTGSISRSNCMVIFINQIRMKIGVMYGSPETTTGGNALKFYASVRLDIRRISTLKDRDEAIGNQVRVKVVKNKVAPPFKQVEFDIMFGEGVSKVGELIDLGVKAGIVEKSGAWFSYNSQRLGQGRENSKGFLRDNPKIAAEIEGSIRQNSGLVAEKILENAAPTADDLDEGEA.

ATP is bound at residue 79-86 (GPESSGKT).

It belongs to the RecA family.

The protein localises to the cytoplasm. In terms of biological role, can catalyze the hydrolysis of ATP in the presence of single-stranded DNA, the ATP-dependent uptake of single-stranded DNA by duplex DNA, and the ATP-dependent hybridization of homologous single-stranded DNAs. It interacts with LexA causing its activation and leading to its autocatalytic cleavage. The chain is Protein RecA from Methylobacterium radiotolerans (strain ATCC 27329 / DSM 1819 / JCM 2831 / NBRC 15690 / NCIMB 10815 / 0-1).